A 142-amino-acid chain; its full sequence is Nucleoside diphosphate kinase (142 aa).

Residues lysine 11, phenylalanine 59, arginine 87, threonine 93, arginine 104, and asparagine 114 each coordinate ATP. Catalysis depends on histidine 117, which acts as the Pros-phosphohistidine intermediate.

The protein belongs to the NDK family. Mg(2+) serves as cofactor.

The protein localises to the cytoplasm. The catalysed reaction is a 2'-deoxyribonucleoside 5'-diphosphate + ATP = a 2'-deoxyribonucleoside 5'-triphosphate + ADP. The enzyme catalyses a ribonucleoside 5'-diphosphate + ATP = a ribonucleoside 5'-triphosphate + ADP. In terms of biological role, major role in the synthesis of nucleoside triphosphates other than ATP. The ATP gamma phosphate is transferred to the NDP beta phosphate via a ping-pong mechanism, using a phosphorylated active-site intermediate. The sequence is that of Nucleoside diphosphate kinase from Hyperthermus butylicus (strain DSM 5456 / JCM 9403 / PLM1-5).